Consider the following 88-residue polypeptide: Small cysteine-rich outer membrane protein OmcA (88 aa).

The N-terminal stretch at 1–18 is a signal peptide; it reads MKKTALLAALCSVVSLSS. C19 carries N-palmitoyl cysteine lipidation. Residue C19 is the site of S-diacylglycerol cysteine attachment.

In terms of assembly, part of a disulfide cross-linked outer membrane complex (COMC) composed of the major outer membrane porin (MOMP), the small cysteine-rich protein (OmcA) and the large cysteine-rich periplasmic protein (OmcB).

It is found in the cell outer membrane. Functionally, in elementary bodies (EBs, the infectious stage, which is able to survive outside the host cell) provides the structural integrity of the outer envelope through disulfide cross-links with the large cysteine-rich periplasmic protein and the major outer membrane porin. It has been described in publications as the Sarkosyl-insoluble COMC (Chlamydia outer membrane complex), and serves as the functional equivalent of peptidoglycan. The chain is Small cysteine-rich outer membrane protein OmcA (omcA) from Chlamydia muridarum (strain MoPn / Nigg).